We begin with the raw amino-acid sequence, 431 residues long: Histidine--tRNA ligase (431 aa).

The protein belongs to the class-II aminoacyl-tRNA synthetase family. As to quaternary structure, homodimer.

It localises to the cytoplasm. It catalyses the reaction tRNA(His) + L-histidine + ATP = L-histidyl-tRNA(His) + AMP + diphosphate + H(+). In Neisseria gonorrhoeae (strain ATCC 700825 / FA 1090), this protein is Histidine--tRNA ligase.